A 383-amino-acid chain; its full sequence is Trichodiene synthase (383 aa).

Belongs to the trichodiene synthase family.

The catalysed reaction is (2E,6E)-farnesyl diphosphate = trichodiene + diphosphate. The protein operates within sesquiterpene biosynthesis; trichothecene biosynthesis. Its function is as follows. TS is a member of the terpene cyclase group of enzymes. It catalyzes the isomerization and cyclization of farnesyl pyro-phosphate to form trichodiene, the first cyclic intermediate in the biosynthetic pathway for trichothecenes. It serves to branch trichothecene biosynthesis from the isoprenoid pathway. The protein is Trichodiene synthase (TRI5) of Gibberella pulicaris.